A 334-amino-acid polypeptide reads, in one-letter code: MKKNQFLKESDVTAESVFFMKRRQVLKALGISAAALSLPHAAHADLLSWFKGNDRPPAPAGKPLEFSKPAAWQNNLPLTPVDKVSGYNNFYEFGLDKADPAANAGSLKTDPWTLKISGEVAKPLTLDHDDLTRRFPLEERIYRMRCVEAWSMVVPWIGFPLHKLLALAEPTSNAKYVAFETIYAPEQMPGQQDRFIGGGLKYPYVEGLRLDEAMHPLTLMTVGVYGKALPPQNGAPVRLIVPWKYGFKGIKSIVSIKLTRERPPTTWNLAAPDEYGFYANVNPHVDHPRWSQATERFIGSGGILDVQRQPTLLFNGYADQVASLYRGLDLRENF.

Residues 1 to 44 constitute a signal peptide (tat-type signal); it reads MKKNQFLKESDVTAESVFFMKRRQVLKALGISAAALSLPHAAHA. Mo-molybdopterin contacts are provided by residues asparagine 88, 91–92, cysteine 146, threonine 181, asparagine 233, arginine 238, and 249–251; these read YE and GIK.

The protein belongs to the MsrP family. As to quaternary structure, heterodimer of a catalytic subunit (MsrP) and a heme-binding subunit (MsrQ). Mo-molybdopterin is required as a cofactor. In terms of processing, predicted to be exported by the Tat system. The position of the signal peptide cleavage has not been experimentally proven.

It is found in the periplasm. The enzyme catalyses L-methionyl-[protein] + a quinone + H2O = L-methionyl-(S)-S-oxide-[protein] + a quinol. It catalyses the reaction L-methionyl-[protein] + a quinone + H2O = L-methionyl-(R)-S-oxide-[protein] + a quinol. Functionally, part of the MsrPQ system that repairs oxidized periplasmic proteins containing methionine sulfoxide residues (Met-O), using respiratory chain electrons. Thus protects these proteins from oxidative-stress damage caused by reactive species of oxygen and chlorine generated by the host defense mechanisms. MsrPQ is essential for the maintenance of envelope integrity under bleach stress, rescuing a wide series of structurally unrelated periplasmic proteins from methionine oxidation, including the primary periplasmic chaperone SurA and the lipoprotein Pal. The catalytic subunit MsrP is non-stereospecific, being able to reduce both (R-) and (S-) diastereoisomers of methionine sulfoxide. The sequence is that of Protein-methionine-sulfoxide reductase catalytic subunit MsrP from Shigella boydii serotype 18 (strain CDC 3083-94 / BS512).